The primary structure comprises 146 residues: MTEQFWQQKKLEEMTEQEWESLCDGCGKCCLHKLMDEDTDEVYYTNVACSWLNSKTCACKDYPKRFTSGEECLKLSRENIAEFNWLPLTCAYRLLAEDKPLPEWHPLITGSKSAMHAAGESVRNKVVYAIDVKNWEDHITNHPHRS.

The protein belongs to the UPF0260 family.

This chain is UPF0260 protein VF_1660, found in Aliivibrio fischeri (strain ATCC 700601 / ES114) (Vibrio fischeri).